Here is a 156-residue protein sequence, read N- to C-terminus: Small ribosomal subunit protein uS7 (156 aa).

It belongs to the universal ribosomal protein uS7 family. Part of the 30S ribosomal subunit. Contacts proteins S9 and S11.

One of the primary rRNA binding proteins, it binds directly to 16S rRNA where it nucleates assembly of the head domain of the 30S subunit. Is located at the subunit interface close to the decoding center, probably blocks exit of the E-site tRNA. The polypeptide is Small ribosomal subunit protein uS7 (Pectobacterium carotovorum subsp. carotovorum (strain PC1)).